The primary structure comprises 1005 residues: Probable beta-galactosidase A (1005 aa).

An N-terminal signal peptide occupies residues 1 to 18 (MKLLSVAAVALLAAQAAG). Positions 96, 140, 141, and 142 each coordinate substrate. N-linked (GlcNAc...) asparagine glycosylation occurs at asparagine 156. Residue asparagine 199 coordinates substrate. Glutamate 200 functions as the Proton donor in the catalytic mechanism. Cysteine 205 and cysteine 206 are disulfide-bonded. A substrate-binding site is contributed by tyrosine 260. A disulfide bond links cysteine 266 and cysteine 315. The Nucleophile role is filled by glutamate 298. Tyrosine 364 provides a ligand contact to substrate. N-linked (GlcNAc...) asparagine glycans are attached at residues asparagine 373, asparagine 402, asparagine 453, asparagine 478, asparagine 522, asparagine 622, asparagine 760, asparagine 777, asparagine 805, and asparagine 914.

Belongs to the glycosyl hydrolase 35 family.

The protein resides in the secreted. The enzyme catalyses Hydrolysis of terminal non-reducing beta-D-galactose residues in beta-D-galactosides.. Cleaves beta-linked terminal galactosyl residues from gangliosides, glycoproteins, and glycosaminoglycans. In Aspergillus flavus (strain ATCC 200026 / FGSC A1120 / IAM 13836 / NRRL 3357 / JCM 12722 / SRRC 167), this protein is Probable beta-galactosidase A (lacA).